The sequence spans 66 residues: Surface composition regulator (66 aa).

This sequence belongs to the GlgS family.

Major determinant of cell surface composition. Negatively regulates motility, adhesion and synthesis of biofilm exopolysaccharides. This is Surface composition regulator from Shigella dysenteriae serotype 1 (strain Sd197).